We begin with the raw amino-acid sequence, 500 residues long: MAKDKDITETLLTAAEERSDLPFLSVDDIPPITTVGGFVREFNVETKKLWYLAGPAIFTSVNQYSLGAITQVFAGHISTIALAAVSVENSVVAGFSFGIMLGMGSALETLCGQAFGAGKLSMLGVYLQRSWVILNVTALILSLLYIFAAPILASIGQTAAISSAAGIFSIYMIPQIFAYAINFPTAKFLQSQSKIMVMAVISAVALVIHVPLTWFVIVKLQWGMPGLAVVLNASWCFIDMAQLVYIFSGTCGEAWSGFSWEAFHNLWSFVRLSLASAVMLCLEVWYFMAIILFAGYLKNAEISVAALSICMNILGWTAMIAIGMNTAVSVRVSNELGANHPRTAKFSLLVAVITSTLIGFIVSMILLIFRDQYPSLFVKDEKVIILVKELTPILALSIVINNVQPVLSGVAVGAGWQAVVAYVNIACYYVFGIPFGLLLGYKLNYGVMGIWCGMLTGTVVQTIVLTWMICKTNWDTEASMAEDRIREWGGEVSEIKQLIN.

A run of 12 helical transmembrane segments spans residues Gly67–Val87, Val91–Cys111, Val132–Leu152, Ile161–Ile181, Val197–Ile217, Leu227–Phe247, Ala277–Leu297, Ile302–Ile322, Leu349–Phe369, Ile393–Gly413, Val419–Leu439, and Gly449–Ile469.

Belongs to the multi antimicrobial extrusion (MATE) (TC 2.A.66.1) family.

The protein resides in the vacuole membrane. The sequence is that of Protein DETOXIFICATION 29 from Arabidopsis thaliana (Mouse-ear cress).